The chain runs to 100 residues: Large ribosomal subunit protein eL30 (100 aa).

It belongs to the eukaryotic ribosomal protein eL30 family.

The sequence is that of Large ribosomal subunit protein eL30 from Thermococcus sibiricus (strain DSM 12597 / MM 739).